Consider the following 420-residue polypeptide: Tyrosine--tRNA ligase (420 aa).

Residue Tyr33 participates in L-tyrosine binding. The 'HIGH' region signature appears at 38–47; that stretch reads PTGDSLHAGH. The L-tyrosine site is built by Tyr167 and Gln171. The 'KMSKS' region motif lies at 227-231; the sequence is KFGKS. Lys230 contributes to the ATP binding site. Residues 352–418 enclose the S4 RNA-binding domain; that stretch reads PTIIDLLIGA…GKKNFAGVKY (67 aa).

This sequence belongs to the class-I aminoacyl-tRNA synthetase family. TyrS type 1 subfamily. As to quaternary structure, homodimer.

It is found in the cytoplasm. It catalyses the reaction tRNA(Tyr) + L-tyrosine + ATP = L-tyrosyl-tRNA(Tyr) + AMP + diphosphate + H(+). In terms of biological role, catalyzes the attachment of tyrosine to tRNA(Tyr) in a two-step reaction: tyrosine is first activated by ATP to form Tyr-AMP and then transferred to the acceptor end of tRNA(Tyr). In Corynebacterium diphtheriae (strain ATCC 700971 / NCTC 13129 / Biotype gravis), this protein is Tyrosine--tRNA ligase.